The primary structure comprises 297 residues: Bifonsecin B biosynthesis cluster protein A (297 aa).

The signal sequence occupies residues 1–20; the sequence is MHFWWTAISAGLLCLPQALG. N-linked (GlcNAc...) asparagine glycans are attached at residues Asn26, Asn56, Asn75, Asn124, Asn175, Asn210, and Asn280.

Belongs to the bfoA family.

Its function is as follows. Part of the gene cluster that mediates the biosynthesis of bifonsecin B, a dimeric gamma-naphthopyrone. The first step in the biosynthesis of bifonsecin B is the production of gamma-naphthopyrone precursor YWA1 by the non-reducing polyketide synthase albA, via condensation of one acetyl-CoA starter unit with 6 malonyl-CoA units. YWA1 is then methylated by bfoE at position C-6 to yield foncesin which is further methylated at position C-8 by bfoD to produce fonsecin B. A key enzyme in the biosynthetic pathway is the cytochrome P450 monooxygenase bfoB which catalyzes the oxidative dimerization of fonsecin B to bifonsecin B. Bfob also catalyzes the oxidative dimerization of rubrofusarin B into nigerone. The stereoselectivity of bfoB is influenced by the two natural monomeric substrates; homodimerization of fonsecin B yields a stereochemically pure biaryl, M-foncerine B, while rubrofusarin B yields a mixture of enantiomers M- and P-nigerone. The function of bfoA within the bifonsecin B biosynthesis pathway has not been determined yet. The sequence is that of Bifonsecin B biosynthesis cluster protein A from Aspergillus brasiliensis (strain CBS 101740 / IMI 381727 / IBT 21946).